The primary structure comprises 521 residues: 2-isopropylmalate synthase (521 aa).

In terms of domain architecture, Pyruvate carboxyltransferase spans 5-267 (VIIFDTTLRD…HTNIKHQEIH (263 aa)). 4 residues coordinate Mn(2+): Asp-14, His-202, His-204, and Asn-238. Positions 392 to 521 (KLNYLSVQSG…FAQKTVMETL (130 aa)) are regulatory domain.

Belongs to the alpha-IPM synthase/homocitrate synthase family. LeuA type 1 subfamily. As to quaternary structure, homodimer. Mn(2+) serves as cofactor.

The protein localises to the cytoplasm. The catalysed reaction is 3-methyl-2-oxobutanoate + acetyl-CoA + H2O = (2S)-2-isopropylmalate + CoA + H(+). It functions in the pathway amino-acid biosynthesis; L-leucine biosynthesis; L-leucine from 3-methyl-2-oxobutanoate: step 1/4. Functionally, catalyzes the condensation of the acetyl group of acetyl-CoA with 3-methyl-2-oxobutanoate (2-ketoisovalerate) to form 3-carboxy-3-hydroxy-4-methylpentanoate (2-isopropylmalate). The chain is 2-isopropylmalate synthase from Tolumonas auensis (strain DSM 9187 / NBRC 110442 / TA 4).